Reading from the N-terminus, the 207-residue chain is Putative threonylcarbamoyl-AMP synthase (207 aa).

Residues 15–199 enclose the YrdC-like domain; that stretch reads EEERKKVLEF…KIISIREGVI (185 aa).

This sequence belongs to the SUA5 family.

The protein localises to the cytoplasm. The enzyme catalyses L-threonine + hydrogencarbonate + ATP = L-threonylcarbamoyladenylate + diphosphate + H2O. In terms of biological role, required for the formation of a threonylcarbamoyl group on adenosine at position 37 (t(6)A37) in tRNAs that read codons beginning with adenine. Catalyzes the conversion of L-threonine, HCO(3)(-)/CO(2) and ATP to give threonylcarbamoyl-AMP (TC-AMP) as the acyladenylate intermediate, with the release of diphosphate. In Methanocaldococcus jannaschii (strain ATCC 43067 / DSM 2661 / JAL-1 / JCM 10045 / NBRC 100440) (Methanococcus jannaschii), this protein is Putative threonylcarbamoyl-AMP synthase.